The primary structure comprises 650 residues: Probable acyl-CoA dehydrogenase FadE10 (650 aa).

Positions 1-23 (MAQQTQVTEEQARALAEESRESG) are disordered. Positions 10–23 (EQARALAEESRESG) are enriched in basic and acidic residues. Glu422 serves as the catalytic Proton acceptor.

The protein belongs to the acyl-CoA dehydrogenase family. FAD serves as cofactor.

The catalysed reaction is a 2,3-saturated acyl-CoA + A = a 2,3-dehydroacyl-CoA + AH2. In Mycobacterium tuberculosis (strain CDC 1551 / Oshkosh), this protein is Probable acyl-CoA dehydrogenase FadE10 (fadE10).